A 398-amino-acid chain; its full sequence is 1-deoxy-D-xylulose 5-phosphate reductoisomerase (398 aa).

Residues threonine 10, glycine 11, serine 12, isoleucine 13, glycine 36, arginine 37, asparagine 38, and asparagine 124 each contribute to the NADPH site. A 1-deoxy-D-xylulose 5-phosphate-binding site is contributed by lysine 125. Residue glutamate 126 coordinates NADPH. Aspartate 150 provides a ligand contact to Mn(2+). The 1-deoxy-D-xylulose 5-phosphate site is built by serine 151, glutamate 152, serine 186, and histidine 209. Glutamate 152 is a binding site for Mn(2+). Residue glycine 215 coordinates NADPH. Residues serine 222, asparagine 227, lysine 228, and glutamate 231 each contribute to the 1-deoxy-D-xylulose 5-phosphate site. Glutamate 231 provides a ligand contact to Mn(2+).

The protein belongs to the DXR family. Homodimer. The cofactor is Mg(2+). Mn(2+) serves as cofactor.

It catalyses the reaction 2-C-methyl-D-erythritol 4-phosphate + NADP(+) = 1-deoxy-D-xylulose 5-phosphate + NADPH + H(+). It participates in isoprenoid biosynthesis; isopentenyl diphosphate biosynthesis via DXP pathway; isopentenyl diphosphate from 1-deoxy-D-xylulose 5-phosphate: step 1/6. Its function is as follows. Catalyzes the NADPH-dependent rearrangement and reduction of 1-deoxy-D-xylulose-5-phosphate (DXP) to 2-C-methyl-D-erythritol 4-phosphate (MEP). The sequence is that of 1-deoxy-D-xylulose 5-phosphate reductoisomerase from Yersinia pseudotuberculosis serotype O:1b (strain IP 31758).